The following is a 197-amino-acid chain: Adenine phosphoribosyltransferase (197 aa).

Belongs to the purine/pyrimidine phosphoribosyltransferase family. As to quaternary structure, homodimer.

It is found in the cytoplasm. The catalysed reaction is AMP + diphosphate = 5-phospho-alpha-D-ribose 1-diphosphate + adenine. Its pathway is purine metabolism; AMP biosynthesis via salvage pathway; AMP from adenine: step 1/1. In terms of biological role, catalyzes a salvage reaction resulting in the formation of AMP, that is energically less costly than de novo synthesis. The polypeptide is Adenine phosphoribosyltransferase (Ralstonia nicotianae (strain ATCC BAA-1114 / GMI1000) (Ralstonia solanacearum)).